We begin with the raw amino-acid sequence, 322 residues long: Ribose-phosphate pyrophosphokinase 1 (322 aa).

ATP contacts are provided by residues 39–41 (DGE) and 98–99 (RQ). The Mg(2+) site is built by histidine 132 and aspartate 173. The active site involves lysine 196. Residues arginine 198, aspartate 224, and 228–232 (DTAGT) each bind D-ribose 5-phosphate.

The protein belongs to the ribose-phosphate pyrophosphokinase family. Class I subfamily. As to quaternary structure, homohexamer. Mg(2+) is required as a cofactor.

The protein resides in the cytoplasm. The enzyme catalyses D-ribose 5-phosphate + ATP = 5-phospho-alpha-D-ribose 1-diphosphate + AMP + H(+). The protein operates within metabolic intermediate biosynthesis; 5-phospho-alpha-D-ribose 1-diphosphate biosynthesis; 5-phospho-alpha-D-ribose 1-diphosphate from D-ribose 5-phosphate (route I): step 1/1. Its function is as follows. Involved in the biosynthesis of the central metabolite phospho-alpha-D-ribosyl-1-pyrophosphate (PRPP) via the transfer of pyrophosphoryl group from ATP to 1-hydroxyl of ribose-5-phosphate (Rib-5-P). In Streptococcus agalactiae serotype III (strain NEM316), this protein is Ribose-phosphate pyrophosphokinase 1.